The following is a 185-amino-acid chain: Shikimate kinase (185 aa).

15-20 (GAGKST) is an ATP binding site. Residue S19 coordinates Mg(2+). Positions 37, 61, and 83 each coordinate substrate. R121 contributes to the ATP binding site. Residue R146 participates in substrate binding.

It belongs to the shikimate kinase family. In terms of assembly, monomer. It depends on Mg(2+) as a cofactor.

Its subcellular location is the cytoplasm. It catalyses the reaction shikimate + ATP = 3-phosphoshikimate + ADP + H(+). It functions in the pathway metabolic intermediate biosynthesis; chorismate biosynthesis; chorismate from D-erythrose 4-phosphate and phosphoenolpyruvate: step 5/7. In terms of biological role, catalyzes the specific phosphorylation of the 3-hydroxyl group of shikimic acid using ATP as a cosubstrate. The protein is Shikimate kinase of Blochmanniella floridana.